Consider the following 256-residue polypeptide: 3-hydroxy-5-phosphonooxypentane-2,4-dione thiolase (256 aa).

Lys-168 serves as the catalytic Schiff-base intermediate with substrate.

This sequence belongs to the DeoC/FbaB aldolase family. In terms of assembly, homodecamer.

The protein localises to the cytoplasm. The catalysed reaction is dihydroxyacetone phosphate + acetyl-CoA = 3-hydroxy-2,4-dioxopentyl phosphate + CoA. Involved in the degradation of phospho-AI-2, thereby terminating induction of the lsr operon and closing the AI-2 signaling cycle. Catalyzes the transfer of an acetyl moiety from 3-hydroxy-5-phosphonooxypentane-2,4-dione to CoA to form glycerone phosphate and acetyl-CoA. This Shigella flexneri serotype 5b (strain 8401) protein is 3-hydroxy-5-phosphonooxypentane-2,4-dione thiolase (lsrF).